The primary structure comprises 300 residues: Enoyl-CoA hydratase domain-containing protein 3, mitochondrial (300 aa).

The transit peptide at 1-66 directs the protein to the mitochondrion; sequence MAVVAGLRAF…RNIVLSNPRR (66 aa). The disordered stretch occupies residues 34–53; it reads GSAGPAGSESEPRLTSTRQQ. The residue at position 110 (K110) is an N6-succinyllysine.

It belongs to the enoyl-CoA hydratase/isomerase family.

It is found in the mitochondrion. In terms of biological role, may play a role in fatty acid biosynthesis and insulin sensitivity. This chain is Enoyl-CoA hydratase domain-containing protein 3, mitochondrial, found in Mus musculus (Mouse).